The following is a 185-amino-acid chain: Ribosome-recycling factor (185 aa).

Belongs to the RRF family.

It is found in the cytoplasm. Functionally, responsible for the release of ribosomes from messenger RNA at the termination of protein biosynthesis. May increase the efficiency of translation by recycling ribosomes from one round of translation to another. The protein is Ribosome-recycling factor of Streptococcus pyogenes serotype M1.